The primary structure comprises 243 residues: Segregation and condensation protein A (243 aa).

The protein belongs to the ScpA family. As to quaternary structure, component of a cohesin-like complex composed of ScpA, ScpB and the Smc homodimer, in which ScpA and ScpB bind to the head domain of Smc. The presence of the three proteins is required for the association of the complex with DNA.

Its subcellular location is the cytoplasm. Functionally, participates in chromosomal partition during cell division. May act via the formation of a condensin-like complex containing Smc and ScpB that pull DNA away from mid-cell into both cell halves. This is Segregation and condensation protein A from Staphylococcus aureus (strain NCTC 8325 / PS 47).